Here is a 289-residue protein sequence, read N- to C-terminus: Nucleotide-binding protein FRAAL4592 (289 aa).

13–20 is an ATP binding site; the sequence is GLSGAGRS. 64 to 67 contributes to the GTP binding site; it reads DVRG.

This sequence belongs to the RapZ-like family.

In terms of biological role, displays ATPase and GTPase activities. In Frankia alni (strain DSM 45986 / CECT 9034 / ACN14a), this protein is Nucleotide-binding protein FRAAL4592.